Reading from the N-terminus, the 327-residue chain is Acyl-CoA desaturase (327 aa).

Residues 1 to 39 are Cytoplasmic-facing; that stretch reads MPDREIKSPIWHPEPGTVEDVFDHTYKEKEGPKPPTVIV. A helical transmembrane segment spans residues 40–60; that stretch reads WRNVILMSLLHLGALYGLFLF. Substrate is bound at residue Asn-42. At 61–64 the chain is on the lumenal side; sequence PSAR. The chain crosses the membrane as a helical span at residues 65–85; sequence ALTWIWFFGCLLFSALGITAG. Residues 86–184 lie on the Cytoplasmic side of the membrane; sequence AHRLWSHRSY…DKVVMFQRRF (99 aa). Residues His-87 and His-92 each contribute to the Fe cation site. The short motif at 87-92 is the Histidine box-1 element; sequence HRLWSH. Substrate is bound by residues Asn-115, Arg-122, and Asp-123. 3 residues coordinate Fe cation: His-124, His-127, and His-128. Residues 124 to 128 carry the Histidine box-2 motif; sequence HRVHH. Substrate contacts are provided by Arg-155 and Lys-156. A helical membrane pass occupies residues 185–204; the sequence is YKPSVLLMCFFVPTFVPWYV. The Lumenal segment spans residues 205-208; that stretch reads WGES. Residues 209 to 230 traverse the membrane as a helical segment; it reads LWVAYFVPALLRYALVLNATWL. Position 229 (Trp-229) interacts with substrate. The Cytoplasmic portion of the chain corresponds to 231–327; the sequence is VNSAAHMWGN…RTGDGSHWSG (97 aa). Residues His-236, His-265, His-268, and His-269 each coordinate Fe cation. The Histidine box-3 signature appears at 265-269; that stretch reads HNYHH.

This sequence belongs to the fatty acid desaturase type 1 family. Fe(2+) is required as a cofactor.

The protein resides in the endoplasmic reticulum membrane. It carries out the reaction octadecanoyl-CoA + 2 Fe(II)-[cytochrome b5] + O2 + 2 H(+) = (9Z)-octadecenoyl-CoA + 2 Fe(III)-[cytochrome b5] + 2 H2O. In terms of biological role, stearoyl-CoA desaturase that utilizes O(2) and electrons from reduced cytochrome b5 to introduce the first double bond into saturated fatty acyl-CoA substrates. Has high specificity and catalyzes the insertion of a cis double bond at the delta-9 position into fatty acyl-CoA substrates including palmitoyl-CoA and stearoyl-CoA. Contributes to the biosynthesis of membrane phospholipids, cholesterol esters and triglycerides. This is Acyl-CoA desaturase from Cyprinus carpio (Common carp).